Here is a 1545-residue protein sequence, read N- to C-terminus: Pentafunctional AROM polypeptide (1545 aa).

Residues 1–383 are 3-dehydroquinate synthase; sequence MSGLIEKVSI…YEPKASYVND (383 aa). Residues 44–46, 82–85, 113–115, and D118 contribute to the NAD(+) site; these read DSN, EANK, and GGV. R129 lines the 7-phospho-2-dehydro-3-deoxy-D-arabino-heptonate pocket. 138-139 contributes to the NAD(+) binding site; it reads TS. The 7-phospho-2-dehydro-3-deoxy-D-arabino-heptonate site is built by D145 and K151. An NAD(+)-binding site is contributed by K160. N161 provides a ligand contact to 7-phospho-2-dehydro-3-deoxy-D-arabino-heptonate. Residues 178–181 and N189 each bind NAD(+); that span reads FLET. E193 contributes to the Zn(2+) binding site. 7-phospho-2-dehydro-3-deoxy-D-arabino-heptonate is bound by residues 193-196 and K249; that span reads EVVK. The active-site Proton acceptor; for 3-dehydroquinate synthase activity is the E259. Residues 263–267 and H270 contribute to the 7-phospho-2-dehydro-3-deoxy-D-arabino-heptonate site; that span reads RNLLN. H270 lines the Zn(2+) pocket. H274 serves as the catalytic Proton acceptor; for 3-dehydroquinate synthase activity. Residues H286 and K355 each coordinate 7-phospho-2-dehydro-3-deoxy-D-arabino-heptonate. Residue H286 participates in Zn(2+) binding. The tract at residues 396-840 is EPSP synthase; sequence VKDFNSAPST…WDILHTTFNV (445 aa). The For EPSP synthase activity role is filled by C822. The tract at residues 859–1049 is shikimate kinase; sequence DKSIIVIGMR…IPNGRSAFVC (191 aa). 866 to 873 provides a ligand contact to ATP; that stretch reads GMRAAGKS. The segment at 1050 to 1261 is 3-dehydroquinase; it reads LTYEDLAPVS…AAPGQLTLKE (212 aa). The active-site Proton acceptor; for 3-dehydroquinate dehydratase activity is H1166. The active-site Schiff-base intermediate with substrate; for 3-dehydroquinate dehydratase activity is K1195. A shikimate dehydrogenase region spans residues 1274-1545; that stretch reads RKKFYIVGKP…GYQFSSHIDL (272 aa).

It in the N-terminal section; belongs to the sugar phosphate cyclases superfamily. Dehydroquinate synthase family. The protein in the 2nd section; belongs to the EPSP synthase family. In the 3rd section; belongs to the shikimate kinase family. This sequence in the 4th section; belongs to the type-I 3-dehydroquinase family. It in the C-terminal section; belongs to the shikimate dehydrogenase family. Homodimer. Zn(2+) is required as a cofactor.

It is found in the cytoplasm. The enzyme catalyses 7-phospho-2-dehydro-3-deoxy-D-arabino-heptonate = 3-dehydroquinate + phosphate. It carries out the reaction 3-dehydroquinate = 3-dehydroshikimate + H2O. It catalyses the reaction shikimate + NADP(+) = 3-dehydroshikimate + NADPH + H(+). The catalysed reaction is shikimate + ATP = 3-phosphoshikimate + ADP + H(+). The enzyme catalyses 3-phosphoshikimate + phosphoenolpyruvate = 5-O-(1-carboxyvinyl)-3-phosphoshikimate + phosphate. Its pathway is metabolic intermediate biosynthesis; chorismate biosynthesis; chorismate from D-erythrose 4-phosphate and phosphoenolpyruvate: step 2/7. It functions in the pathway metabolic intermediate biosynthesis; chorismate biosynthesis; chorismate from D-erythrose 4-phosphate and phosphoenolpyruvate: step 3/7. It participates in metabolic intermediate biosynthesis; chorismate biosynthesis; chorismate from D-erythrose 4-phosphate and phosphoenolpyruvate: step 4/7. The protein operates within metabolic intermediate biosynthesis; chorismate biosynthesis; chorismate from D-erythrose 4-phosphate and phosphoenolpyruvate: step 5/7. Its pathway is metabolic intermediate biosynthesis; chorismate biosynthesis; chorismate from D-erythrose 4-phosphate and phosphoenolpyruvate: step 6/7. In terms of biological role, the AROM polypeptide catalyzes 5 consecutive enzymatic reactions in prechorismate polyaromatic amino acid biosynthesis. The sequence is that of Pentafunctional AROM polypeptide from Komagataella phaffii (strain GS115 / ATCC 20864) (Yeast).